The following is a 214-amino-acid chain: MAPMKLYGAVMSWNLTRCATALEEAGSDYEIVPINFATAEHKSPEHLVRNPFGQVPALQDGDLYLFESRAICKYAARKNKPELLREGNLEEAAMVDVWIEVEANQYTAALNPILFQVLISPMLGGTTDQKVVDENLEKLKKVLEVYEARLTKCKYLAGDFLSLADLNHVSVTLCLFATPYASVLDAYPHVKAWWSGLMERPSVQKVAALMKPSA.

One can recognise a GST N-terminal domain in the interval 2 to 83; the sequence is APMKLYGAVM…YAARKNKPEL (82 aa). Residues S12, 41 to 42, 54 to 55, and 67 to 68 each bind glutathione; these read HK, QV, and ES. A GST C-terminal domain is found at 88 to 214; sequence NLEEAAMVDV…KVAALMKPSA (127 aa).

The protein belongs to the GST superfamily. Phi family. In terms of assembly, homodimer or heterodimer of GST-I and GST-IV (=GST-II). In terms of tissue distribution, expressed in the stem and leaves, lower levels are seen in the pollen and endosperm.

The enzyme catalyses RX + glutathione = an S-substituted glutathione + a halide anion + H(+). Its function is as follows. Conjugation of reduced glutathione to a wide number of exogenous and endogenous hydrophobic electrophiles. Involved in the detoxification of certain herbicides. The protein is Glutathione S-transferase 1 (GST1) of Zea mays (Maize).